The primary structure comprises 820 residues: Scavenger receptor class F member 1 (820 aa).

The first 23 residues, 1–23 (MLAAMGLELVFSLLLLWTQGTQG), serve as a signal peptide directing secretion. Residues 24 to 422 (STLDPAGQHV…TCQLGRHGKN (399 aa)) are Extracellular-facing. EGF-like domains follow at residues 56–90 (TIPI…AQCS), 98–133 (WGHD…RLCE), 163–193 (RRPC…RRCS), and 217–251 (WGPE…IRCE). 12 cysteine pairs are disulfide-bonded: Cys60–Cys72, Cys66–Cys78, Cys80–Cys89, Cys102–Cys114, Cys108–Cys121, Cys123–Cys132, Cys166–Cys174, Cys168–Cys181, Cys183–Cys192, Cys221–Cys232, Cys225–Cys239, and Cys241–Cys250. An N-linked (GlcNAc...) asparagine glycan is attached at Asn291. 2 EGF-like domains span residues 304–341 (FGER…HRCE) and 353–384 (CSST…TSCN). A helical membrane pass occupies residues 423–443 (ALIVGILVPLLLLLMGIVCCA). Residues 444-820 (YCCSGTRLDP…VVPMSVPPQH (377 aa)) lie on the Cytoplasmic side of the membrane. Disordered regions lie at residues 549–685 (PMAQ…IQES) and 715–820 (NYQK…PPQH). Residues Ser590 and Ser607 each carry the phosphoserine modification. Residues 631 to 648 (QEAEESTGPEQVNTEEDA) show a composition bias toward acidic residues. Positions 650-662 (TATSSGDPATSHG) are enriched in polar residues.

As to quaternary structure, heterophilic interaction with SREC2 via its extracellular domain. The heterophilic interaction is suppressed by the presence of ligand such as Ac-LDL. Interacts with AVIL; the interaction occurs in embryonic dorsal root ganglions at 18 dpc and induces neurite-like outgrowth. In terms of tissue distribution, expressed weakly in brain, spinal cord and dorsal root ganglions.

It localises to the membrane. Functionally, mediates the binding and degradation of acetylated low density lipoprotein (Ac-LDL). Mediates heterophilic interactions, suggesting a function as adhesion protein. Plays a role in the regulation of neurite-like outgrowth. The polypeptide is Scavenger receptor class F member 1 (Scarf1) (Mus musculus (Mouse)).